A 1595-amino-acid polypeptide reads, in one-letter code: A disintegrin and metalloproteinase with thrombospondin motifs 7 (1595 aa).

Residues 1–20 (MHRGLNLLLILCALAPHVLG) form the signal peptide. The propeptide occupies 21-217 (PASGLPTEGR…QRQQKRRQQR (197 aa)). N84 and N105 each carry an N-linked (GlcNAc...) asparagine glycan. A disordered region spans residues 165–218 (PGHAQPHMVYKHKRSGQQDDSRTSGTCGVQGSPELKHQREHWEQRQQKRRQQRS). Residues 189-196 (GTCGVQGS) carry the Cysteine switch motif. Residue C191 coordinates Zn(2+). A compositionally biased stretch (basic and acidic residues) spans 198–210 (ELKHQREHWEQRQ). The region spanning 223 to 434 (KWVETLVVAD…GWGLCLDDRP (212 aa)) is the Peptidase M12B domain. Intrachain disulfides connect C299/C353, C328/C335, C347/C429, C386/C413, C456/C479, C467/C485, C474/C504, C498/C509, C532/C569, C536/C574, and C547/C559. H369 lines the Zn(2+) pocket. The active site involves E370. 2 residues coordinate Zn(2+): H373 and H379. One can recognise a Disintegrin domain in the interval 444 to 519 (VLPGVLYDVN…VPEGFQPETV (76 aa)). The TSP type-1 1 domain maps to 520-575 (DGGWSGWSAWSVCSRSCGVGVRSSERQCTQPVPKNKGKYCVGERKRYRLCNLQACP). N-linked (GlcNAc...) asparagine glycosylation occurs at N619. The segment at 680–791 (HTVSRTFKEA…PGVHYKYTIQ (112 aa)) is spacer. 3 consecutive TSP type-1 domains span residues 801-860 (PEFS…EPCP), 861-917 (ARWW…IPCY), and 922-975 (CPSS…QPCQ). 4 disordered regions span residues 989-1035 (GSSS…LDPP), 1077-1121 (PPHI…SHSP), 1179-1234 (REDT…LSPD), and 1255-1315 (KPVH…APTD). Composition is skewed to pro residues over residues 1005–1015 (QPVPRPSPASS) and 1079–1089 (HIRPTEPPSDS). The segment covering 1220–1232 (SSPSNSTTQASLS) has biased composition (low complexity). Polar residues predominate over residues 1268 to 1280 (QIQTPHTEGTQSP). TSP type-1 domains follow at residues 1320-1368 (KNAS…RHCH), 1371-1431 (PCAA…QPCL), 1433-1476 (WYTS…PCNT), and 1478-1538 (PCTQ…EDCE). A PLAC domain is found at 1541 to 1581 (EPSRCERDRLPFNFCETLRLLGRCQLPTIRAQCCRSCPPLS).

As to quaternary structure, interacts with COMP. Zn(2+) serves as cofactor. In terms of processing, glycosylated. Can be O-fucosylated by POFUT2 on a serine or a threonine residue found within the consensus sequence C1-X(2)-(S/T)-C2-G of the TSP type-1 repeat domains where C1 and C2 are the first and second cysteine residue of the repeat, respectively. Fucosylated repeats can then be further glycosylated by the addition of a beta-1,3-glucose residue by the glucosyltransferase, B3GALTL. Fucosylation mediates the efficient secretion of ADAMTS family members. Can also be C-glycosylated with one or two mannose molecules on tryptophan residues within the consensus sequence W-X-X-W of the TPRs. N- and C-glycosylations can also facilitate secretion. O-glycosylated proteoglycan; contains chondroitin sulfate. Post-translationally, may be cleaved by a furin endopeptidase. The precursor is sequentially processed. In terms of tissue distribution, detected in liver, ovary, kidney, testicle, lung and embryo.

It is found in the secreted. The protein localises to the extracellular space. Its subcellular location is the extracellular matrix. Functionally, metalloprotease. Was previously shown to degrade COMP. However, a later study found no activity against COMP. The chain is A disintegrin and metalloproteinase with thrombospondin motifs 7 (Adamts7) from Rattus norvegicus (Rat).